A 138-amino-acid chain; its full sequence is Phosphoribosyl-AMP cyclohydrolase (138 aa).

Residues 1–23 (MSEQSAPSPTPAAELSSDPASPL) are disordered. D100 is a Mg(2+) binding site. C101 lines the Zn(2+) pocket. Residues D102 and D104 each coordinate Mg(2+). C117 and C124 together coordinate Zn(2+).

This sequence belongs to the PRA-CH family. As to quaternary structure, homodimer. It depends on Mg(2+) as a cofactor. Requires Zn(2+) as cofactor.

The protein localises to the cytoplasm. The enzyme catalyses 1-(5-phospho-beta-D-ribosyl)-5'-AMP + H2O = 1-(5-phospho-beta-D-ribosyl)-5-[(5-phospho-beta-D-ribosylamino)methylideneamino]imidazole-4-carboxamide. Its pathway is amino-acid biosynthesis; L-histidine biosynthesis; L-histidine from 5-phospho-alpha-D-ribose 1-diphosphate: step 3/9. In terms of biological role, catalyzes the hydrolysis of the adenine ring of phosphoribosyl-AMP. This chain is Phosphoribosyl-AMP cyclohydrolase, found in Paenarthrobacter aurescens (strain TC1).